The chain runs to 102 residues: Large ribosomal subunit protein bL28 (102 aa).

Residues 1–20 (MSRRCELTAKGPQVGHKVSH) form a disordered region.

Belongs to the bacterial ribosomal protein bL28 family.

This is Large ribosomal subunit protein bL28 from Bradyrhizobium sp. (strain BTAi1 / ATCC BAA-1182).